The chain runs to 163 residues: Nucleotide-binding protein BPUM_1028 (163 aa).

The protein belongs to the YajQ family.

Functionally, nucleotide-binding protein. This chain is Nucleotide-binding protein BPUM_1028, found in Bacillus pumilus (strain SAFR-032).